The following is a 246-amino-acid chain: Probable transcriptional regulatory protein ORF2U (246 aa).

It belongs to the TACO1 family.

The protein resides in the cytoplasm. This chain is Probable transcriptional regulatory protein ORF2U, found in Hathewaya histolytica (Clostridium histolyticum).